Consider the following 383-residue polypeptide: Homoserine O-succinyltransferase (383 aa).

Residues 51-360 (NAILLCHALS…EAEHGHDSFL (310 aa)) enclose the AB hydrolase-1 domain. Ser157 functions as the Nucleophile in the catalytic mechanism. Arg227 contacts substrate. Residues Asp323 and His356 contribute to the active site. Asp357 is a binding site for substrate.

This sequence belongs to the AB hydrolase superfamily. MetX family. As to quaternary structure, homodimer.

Its subcellular location is the cytoplasm. The enzyme catalyses L-homoserine + succinyl-CoA = O-succinyl-L-homoserine + CoA. Its pathway is amino-acid biosynthesis; L-methionine biosynthesis via de novo pathway; O-succinyl-L-homoserine from L-homoserine: step 1/1. In terms of biological role, transfers a succinyl group from succinyl-CoA to L-homoserine, forming succinyl-L-homoserine. The polypeptide is Homoserine O-succinyltransferase (Acidithiobacillus ferrooxidans (strain ATCC 23270 / DSM 14882 / CIP 104768 / NCIMB 8455) (Ferrobacillus ferrooxidans (strain ATCC 23270))).